We begin with the raw amino-acid sequence, 519 residues long: MHFIYRVVLVLAAFALFKVDSISAGVTFNEEHLTIPRFTRPVEENLIKRQLRVMDDNERGFPSGPSLEKIEAMFQSLTNKITTKSKPSQRDVPDEKLSQLLGAAKPVNKAVEAAGRLKTLQTQKWLDEGKSTQEVFQLLELNKFMVPNFKKIEGTVFGLPDFNTWVNYVDDFNAKNPTKKESMIPTLRTIYSDEGLTRALELAKTYSTTNALATKLRKEQIQRWLDDAQTPKYVFEMFMIDDKVDGLLTNPRFIAWTKYVDDFNLQYPTSRASMEPPIAAHYGDDAVFAMLEAAKKVQLTENVASRLQAEQIKRLLNSNRSPEYVFEAFNLHETGDNLLSTPMFKTWFNYLESFNKKNTDKETLLAPIHRYYHDHGVAKIVAEGMKNPSTVELSKQLQIQRYKRWLHAERPPRDAFNTFILEKPGADVIIRYNERLDGKLYQVRLNKVSDGLLSSPEFQLWSKYLDDWNTKYPDQKQSMAKIFQALFTEDALAKMIMAARNNPSTQKIASLLENAFAKV.

A signal peptide spans 1-24 (MHFIYRVVLVLAAFALFKVDSISA). Positions 49–59 (RQLRVMDDNER) match the RxLR-dEER motif.

It belongs to the RxLR effector family.

The protein resides in the secreted. It is found in the host cytoplasm. In terms of biological role, effector that enhances P.infestans colonization of Nicotiana benthamiana leaves. This chain is RxLR effector protein PITG_15278, found in Phytophthora infestans (strain T30-4) (Potato late blight agent).